The primary structure comprises 427 residues: Enolase (427 aa).

Q163 contributes to the (2R)-2-phosphoglycerate binding site. Catalysis depends on E205, which acts as the Proton donor. Residues D242, E285, and D312 each coordinate Mg(2+). 4 residues coordinate (2R)-2-phosphoglycerate: K337, R366, S367, and K388. The Proton acceptor role is filled by K337.

Belongs to the enolase family. Mg(2+) is required as a cofactor.

Its subcellular location is the cytoplasm. The protein localises to the secreted. The protein resides in the cell surface. It carries out the reaction (2R)-2-phosphoglycerate = phosphoenolpyruvate + H2O. The protein operates within carbohydrate degradation; glycolysis; pyruvate from D-glyceraldehyde 3-phosphate: step 4/5. Catalyzes the reversible conversion of 2-phosphoglycerate (2-PG) into phosphoenolpyruvate (PEP). It is essential for the degradation of carbohydrates via glycolysis. The polypeptide is Enolase (Bradyrhizobium sp. (strain BTAi1 / ATCC BAA-1182)).